The sequence spans 94 residues: uncharacterized protein (94 aa).

This is an uncharacterized protein from Homo sapiens (Human).